A 560-amino-acid polypeptide reads, in one-letter code: MSPPVAGAASSGDGPPGRPPRELYTIPASSGWFQWDEIHETERRALPEFFGGAGGSGFGTASRNPRIYREYRDYIISRYREDTSRRLTFTEVRKALVGDVTLLRKLFAFLDSSGLINFSASPSRPEAQQQQRQTEAEAVVEAPVGLQVTPRPPPSYFAEEKGGGGNENGFRLPPLTSYSDVFGEWAPGMAPICGLCGMECRDGNAQILKDGFKVCSKCYANNDNKGEANIHPGDKKERIDNHSSSAWTDAETLLLLEGVLKHGDDWDLIAQHVRTKNKSECIARLIQLPFGEHMLGTVNGKLDNRLHKIQTTDGKVNKSTVKESSSQPTETVDDMQIDGNEDGADKSVEEHPTKHRRLFSSIDITVSLMEQLAHLTTSTSPDVVAAAADAAIKALGNENPQARRAFQLSEKEYQTRAFSSNHARQSDDVGGGDRDVEMHGHPDKKQGKMFISTTYQVRAAVATSIGVAAARAKMLADQEEREMELLMASIIETQLKKIQYKIKHFEELELIMDQEYATLQQMKSSLVDEWQKVLKRAFETGVPISRDEVLIKLFQNKPNL.

Low complexity predominate over residues 1 to 13 (MSPPVAGAASSGD). The segment at 1–22 (MSPPVAGAASSGDGPPGRPPRE) is disordered. The SWIRM domain occupies 24–127 (YTIPASSGWF…FSASPSRPEA (104 aa)). One can recognise an SANT domain in the interval 242 to 293 (HSSSAWTDAETLLLLEGVLKHGDDWDLIAQHVRTKNKSECIARLIQLPFGEH). The span at 311–330 (TTDGKVNKSTVKESSSQPTE) shows a compositional bias: polar residues. Disordered regions lie at residues 311–352 (TTDG…EEHP) and 414–445 (QTRAFSSNHARQSDDVGGGDRDVEMHGHPDKK). Positions 331-342 (TVDDMQIDGNED) are enriched in acidic residues. Composition is skewed to basic and acidic residues over residues 343 to 352 (GADKSVEEHP) and 424 to 445 (RQSDDVGGGDRDVEMHGHPDKK).

As to quaternary structure, interacts with LFR.

The protein localises to the nucleus. In terms of biological role, component of a multiprotein complex equivalent of the SWI/SNF complex, an ATP-dependent chromatin-remodeling complex, which is required for the positive and negative regulation of gene expression of a large number of genes. It changes chromatin structure by altering DNA-histone contacts within a nucleosome, leading eventually to a change in nucleosome position, thus facilitating or repressing binding of gene-specific transcription factors. The sequence is that of SWI/SNF complex subunit SWI3A homolog from Oryza sativa subsp. japonica (Rice).